We begin with the raw amino-acid sequence, 307 residues long: Transposase InsD for insertion element IS2-9 (307 aa).

In terms of domain architecture, Integrase catalytic spans 112 to 295 (KPAVPPSKRA…SPREYLRQRA (184 aa)).

Its function is as follows. Involved in the transposition of the insertion sequence IS2. This is Transposase InsD for insertion element IS2-9 from Escherichia coli (strain K12).